The sequence spans 128 residues: L-ectoine synthase (128 aa).

It belongs to the ectoine synthase family.

It carries out the reaction (2S)-4-acetamido-2-aminobutanoate = L-ectoine + H2O. It participates in amine and polyamine biosynthesis; ectoine biosynthesis; L-ectoine from L-aspartate 4-semialdehyde: step 3/3. Its function is as follows. Catalyzes the circularization of gamma-N-acetyl-alpha,gamma-diaminobutyric acid (ADABA) to ectoine (1,4,5,6-tetrahydro-2-methyl-4-pyrimidine carboxylic acid), which is an excellent osmoprotectant. This chain is L-ectoine synthase, found in Aliivibrio fischeri (strain MJ11) (Vibrio fischeri).